A 204-amino-acid chain; its full sequence is B9 domain-containing protein 1 (204 aa).

The 119-residue stretch at 9 to 127 (FLLMITGQVE…TIPMFVPEST (119 aa)) folds into the C2 B9-type domain.

Belongs to the B9D family. In terms of assembly, part of the tectonic-like complex (also named B9 complex).

Its subcellular location is the cytoplasm. It is found in the cytoskeleton. The protein resides in the cilium basal body. Component of the tectonic-like complex, a complex localized at the transition zone of primary cilia and acting as a barrier that prevents diffusion of transmembrane proteins between the cilia and plasma membranes. Required for ciliogenesis and sonic hedgehog/SHH signaling. The chain is B9 domain-containing protein 1 (B9d1) from Mus musculus (Mouse).